Consider the following 216-residue polypeptide: Elongation factor Ts (216 aa).

Residues 81 to 84 (TDFV) are involved in Mg(2+) ion dislocation from EF-Tu.

The protein belongs to the EF-Ts family.

It is found in the cytoplasm. Associates with the EF-Tu.GDP complex and induces the exchange of GDP to GTP. It remains bound to the aminoacyl-tRNA.EF-Tu.GTP complex up to the GTP hydrolysis stage on the ribosome. This is Elongation factor Ts from Geobacter sulfurreducens (strain ATCC 51573 / DSM 12127 / PCA).